The primary structure comprises 233 residues: Endonuclease V (233 aa).

Mg(2+) is bound by residues aspartate 48 and aspartate 116.

Belongs to the endonuclease V family. Mg(2+) serves as cofactor.

The protein localises to the cytoplasm. The catalysed reaction is Endonucleolytic cleavage at apurinic or apyrimidinic sites to products with a 5'-phosphate.. In terms of biological role, DNA repair enzyme involved in the repair of deaminated bases. Selectively cleaves double-stranded DNA at the second phosphodiester bond 3' to a deoxyinosine leaving behind the intact lesion on the nicked DNA. The sequence is that of Endonuclease V from Streptomyces coelicolor (strain ATCC BAA-471 / A3(2) / M145).